The primary structure comprises 219 residues: Urease subunit gamma/beta (219 aa).

The urease gamma stretch occupies residues 1 to 101 (MFLTPREQEK…LVTVRNPIKS (101 aa)). The interval 102 to 219 (SKKTLNTYII…IKRAKERGFA (118 aa)) is urease beta.

In the N-terminal section; belongs to the urease gamma subunit family. It in the C-terminal section; belongs to the urease beta subunit family. Heterohexamer of 3 UreC (alpha) and 3 UreAB (gamma/beta) subunits.

It is found in the cytoplasm. The catalysed reaction is urea + 2 H2O + H(+) = hydrogencarbonate + 2 NH4(+). Its pathway is nitrogen metabolism; urea degradation; CO(2) and NH(3) from urea (urease route): step 1/1. In Sulfurisphaera tokodaii (strain DSM 16993 / JCM 10545 / NBRC 100140 / 7) (Sulfolobus tokodaii), this protein is Urease subunit gamma/beta.